The chain runs to 320 residues: o-succinylbenzoate synthase (320 aa).

Catalysis depends on Lys-133, which acts as the Proton donor. Mg(2+) contacts are provided by Asp-161, Glu-190, and Asp-213. The Proton acceptor role is filled by Lys-235.

It belongs to the mandelate racemase/muconate lactonizing enzyme family. MenC type 1 subfamily. A divalent metal cation is required as a cofactor.

It carries out the reaction (1R,6R)-6-hydroxy-2-succinyl-cyclohexa-2,4-diene-1-carboxylate = 2-succinylbenzoate + H2O. Its pathway is quinol/quinone metabolism; 1,4-dihydroxy-2-naphthoate biosynthesis; 1,4-dihydroxy-2-naphthoate from chorismate: step 4/7. It functions in the pathway quinol/quinone metabolism; menaquinone biosynthesis. In terms of biological role, converts 2-succinyl-6-hydroxy-2,4-cyclohexadiene-1-carboxylate (SHCHC) to 2-succinylbenzoate (OSB). The polypeptide is o-succinylbenzoate synthase (Escherichia coli O81 (strain ED1a)).